The sequence spans 283 residues: Protease HtpX (283 aa).

2 helical membrane-spanning segments follow: residues 4–24 (ILLF…ILNV) and 33–53 (GGIL…SLFL). A Zn(2+)-binding site is contributed by histidine 139. Glutamate 140 is a catalytic residue. A Zn(2+)-binding site is contributed by histidine 143. 2 helical membrane passes run 147-167 (GDMV…IFLS) and 190-210 (IYFL…SIIA). Glutamate 218 lines the Zn(2+) pocket.

It belongs to the peptidase M48B family. Zn(2+) serves as cofactor.

It localises to the cell inner membrane. In Haemophilus influenzae (strain 86-028NP), this protein is Protease HtpX.